A 104-amino-acid polypeptide reads, in one-letter code: uncharacterized protein (104 aa).

The signal sequence occupies residues 1–23 (MDIHDYVELIALAFWVISVVSVG).

This is an uncharacterized protein from Lactobacillus helveticus (Lactobacillus suntoryeus).